A 264-amino-acid polypeptide reads, in one-letter code: Indole-3-glycerol phosphate synthase (264 aa).

This sequence belongs to the TrpC family.

The catalysed reaction is 1-(2-carboxyphenylamino)-1-deoxy-D-ribulose 5-phosphate + H(+) = (1S,2R)-1-C-(indol-3-yl)glycerol 3-phosphate + CO2 + H2O. It functions in the pathway amino-acid biosynthesis; L-tryptophan biosynthesis; L-tryptophan from chorismate: step 4/5. The polypeptide is Indole-3-glycerol phosphate synthase (Polaromonas sp. (strain JS666 / ATCC BAA-500)).